The chain runs to 301 residues: Acetylglutamate kinase (301 aa).

Residues 68-69, arginine 90, and asparagine 195 contribute to the substrate site; that span reads GG.

Belongs to the acetylglutamate kinase family. ArgB subfamily.

Its subcellular location is the cytoplasm. The catalysed reaction is N-acetyl-L-glutamate + ATP = N-acetyl-L-glutamyl 5-phosphate + ADP. It participates in amino-acid biosynthesis; L-arginine biosynthesis; N(2)-acetyl-L-ornithine from L-glutamate: step 2/4. In terms of biological role, catalyzes the ATP-dependent phosphorylation of N-acetyl-L-glutamate. The polypeptide is Acetylglutamate kinase (Pseudomonas entomophila (strain L48)).